The chain runs to 477 residues: Inositol phosphosphingolipids phospholipase C (477 aa).

Topologically, residues 1–398 are cytoplasmic; the sequence is MYNRKDRDVH…QRQKFFRGLH (398 aa). Glutamate 100 is a binding site for Mg(2+). The active-site Proton acceptor is histidine 334. A helical transmembrane segment spans residues 399–417; it reads FWASILLLIASLVVTTFTA. The Mitochondrial intermembrane portion of the chain corresponds to 418–424; it reads NKAGWSS. A helical transmembrane segment spans residues 425-449; it reads IFWVLFAIAVSISGTIDGAISFLFG. Residues 450-477 are Cytoplasmic-facing; it reads RSEIRALIEVEQEVLDAEHHLQTFLSEK.

This sequence belongs to the neutral sphingomyelinase family. The cofactor is Mg(2+).

The protein localises to the endoplasmic reticulum membrane. Its subcellular location is the mitochondrion outer membrane. The catalysed reaction is an N-acyl-(4R)-4-hydroxysphinganine-1-phosphoinositol + H2O = 1D-myo-inositol 1-phosphate + an N-acyl-(4R)-4-hydroxysphinganine + H(+). It catalyses the reaction a mannosylinositol-1-phospho-N-acyl-sphingoid base + H2O = mannosylinositol-1-phosphate + an N-acyl-sphingoid base + H(+). The enzyme catalyses an inositol phosphomannosylinositol-1-phospho-N-acyl-(4R)-4-hydroxysphinganine + H2O = mannosyldiinositol-1-phosphate + an N-acyl-(4R)-4-hydroxysphinganine + H(+). Its pathway is lipid metabolism; sphingolipid metabolism. Activated through localization to mitochondria in specific growth phases. In terms of biological role, responsible for the hydrolysis of the phosphosphingolipids (IPS), inositol phosphorylceramide (IPC), mannosylinositol phosphorylceramide (MIPC), and mannosyldiinositol phosphorylceramide (M(IP)2C). Regulates sphingolipid metabolism in mitochondria, especially the formation of alpha-hydroxylated very long chain phytoceramides. The generated ceramides contribute to the normal function of mitochondria. Also active on sphingomyelin (SM), but this activity is probably not physiologically relevant. This is Inositol phosphosphingolipids phospholipase C from Saccharomyces cerevisiae (strain ATCC 204508 / S288c) (Baker's yeast).